The following is a 68-amino-acid chain: Large ribosomal subunit protein uL29 (68 aa).

It belongs to the universal ribosomal protein uL29 family.

In Bradyrhizobium sp. (strain BTAi1 / ATCC BAA-1182), this protein is Large ribosomal subunit protein uL29.